Consider the following 686-residue polypeptide: U-box domain-containing protein 19 (686 aa).

A U-box domain is found at 277–351 (LNVDDLRCPI…QSYSKQNGVV (75 aa)). ARM repeat units lie at residues 406–445 (TFYRSCLVEAGVVESLMKILRSDDPRIQENAMAGIMNLSK), 448–489 (AGKT…YLSS), 491–533 (GDYS…SLLM), 536–577 (PDNH…KMAE), and 579–620 (PDGM…NLCH).

The enzyme catalyses S-ubiquitinyl-[E2 ubiquitin-conjugating enzyme]-L-cysteine + [acceptor protein]-L-lysine = [E2 ubiquitin-conjugating enzyme]-L-cysteine + N(6)-ubiquitinyl-[acceptor protein]-L-lysine.. Its pathway is protein modification; protein ubiquitination. Its function is as follows. Functions as an E3 ubiquitin ligase. In Arabidopsis thaliana (Mouse-ear cress), this protein is U-box domain-containing protein 19 (PUB19).